A 66-amino-acid chain; its full sequence is Conotoxin TsMEKL-03 (66 aa).

Positions 1–9 are cleaved as a signal peptide; it reads VILLMSTQA. Residues 10-38 constitute a propeptide that is removed on maturation; the sequence is LIQSGVEKRSNKIKALSKRKTTAESWWEG. Intrachain disulfides connect C40–C54, C47–C58, and C53–C63.

This sequence belongs to the conotoxin O2 superfamily. As to expression, expressed by the venom duct.

Its subcellular location is the secreted. In Conus tessulatus (Tessellate cone), this protein is Conotoxin TsMEKL-03.